The chain runs to 380 residues: uncharacterized protein (380 aa).

9 helical membrane-spanning segments follow: residues 15–35 (LFHP…LAFP), 45–65 (LFKI…PFIF), 75–95 (ILYL…FKIT), 98–118 (LFLS…FVKF), 123–143 (IFVD…VLIY), 182–202 (IIAF…MLFI), 217–237 (MVLL…IILL), 303–323 (GTIY…LGVI), and 341–361 (LLLA…LSLL).

The protein localises to the cell membrane. This is an uncharacterized protein from Methanocaldococcus jannaschii (strain ATCC 43067 / DSM 2661 / JAL-1 / JCM 10045 / NBRC 100440) (Methanococcus jannaschii).